A 270-amino-acid chain; its full sequence is Phosphoribosylformylglycinamidine synthase subunit PurQ (270 aa).

The region spanning 5–251 (ALVLHATGTN…VIRERDSEEE (247 aa)) is the Glutamine amidotransferase type-1 domain. Residue Cys95 is the Nucleophile of the active site. Catalysis depends on residues His236 and Glu238.

Part of the FGAM synthase complex composed of 1 PurL, 1 PurQ and 2 PurS subunits.

It localises to the cytoplasm. The catalysed reaction is N(2)-formyl-N(1)-(5-phospho-beta-D-ribosyl)glycinamide + L-glutamine + ATP + H2O = 2-formamido-N(1)-(5-O-phospho-beta-D-ribosyl)acetamidine + L-glutamate + ADP + phosphate + H(+). It catalyses the reaction L-glutamine + H2O = L-glutamate + NH4(+). It functions in the pathway purine metabolism; IMP biosynthesis via de novo pathway; 5-amino-1-(5-phospho-D-ribosyl)imidazole from N(2)-formyl-N(1)-(5-phospho-D-ribosyl)glycinamide: step 1/2. In terms of biological role, part of the phosphoribosylformylglycinamidine synthase complex involved in the purines biosynthetic pathway. Catalyzes the ATP-dependent conversion of formylglycinamide ribonucleotide (FGAR) and glutamine to yield formylglycinamidine ribonucleotide (FGAM) and glutamate. The FGAM synthase complex is composed of three subunits. PurQ produces an ammonia molecule by converting glutamine to glutamate. PurL transfers the ammonia molecule to FGAR to form FGAM in an ATP-dependent manner. PurS interacts with PurQ and PurL and is thought to assist in the transfer of the ammonia molecule from PurQ to PurL. This chain is Phosphoribosylformylglycinamidine synthase subunit PurQ, found in Treponema denticola (strain ATCC 35405 / DSM 14222 / CIP 103919 / JCM 8153 / KCTC 15104).